Consider the following 385-residue polypeptide: Phosphotransferase FrzJ (385 aa).

Positions 38 and 59 each coordinate ATP. Asp-245 is an active-site residue.

It belongs to the methylthioribose kinase family. Monomer.

The enzyme catalyses (1S,3S,6S,7S,8S,9S)-6-[(4-methoxyphenyl)methyl]-3-(methylamino)-5-azatricyclo[6.3.1.0(1,5)]dodecane-7,9-diol + ATP = (-)-FR901483 + ADP + 2 H(+). It participates in secondary metabolite biosynthesis. Its function is as follows. Phosphotransferase; part of the gene cluster that mediates the biosynthesis of the alkaloid (-)-FR901483, a potent immunosuppressant that shows efficacy in animal models and a probable inhibitor of purine nucleotide biosynthesis by targeting phosphoribosylpyrophosphate amidotransferase (PPAT). FrzJ catalyzes the last step of the pathway by phosphorylating the C4'-OH of dephospho-(-)-FR901483 to produce (-)-FR901483. The biosynthesis of (-)-FR901483 starts with the condensation of two L-tyrosines to yield (S,S)-dityrosyl-piperazine. This process occurs in 3 steps with the non-canonical nonribosomal peptide synthetase FrzA catalyzing the reduction of L-tyrosine into L-tyrosinal, the spontaneous condensation of 2 L-tyrosinal units, and the subsequent reduction by the NmrA-like family domain-containing oxidoreductase FrzB. The cytochrome P450 monooxygenase FrzC then performs coupling between N10 and C1' to morph the piperazine into a 1,4-diazabicyclo[3.2.1]octane spiro-fused to a 2,5-cyclohexadienone. The dienone portion is further reduced to cyclohexanone by the flavin-dependent reductase FrzD. The methyltranserases (MTs) FrzE and FrzF are then involved in the methylation at the C10' amine and the C4 phenolic oxygen, respectively. The order of the two MTs appear to be interchangeable. Cleavage of the C9-N10' bond by the dioxygenase FrzG then leads to formation of a conjugated iminium. In addition to the oxidation of C9, an additional dehydrogenation between C7 and C8 can occur to give a likely shunt product. The next biosynthetic step is the intramolecular aldol condensation catalyzed by the newly identified aldolase FrzH to yield an aza-tricyclic product with the formation of a C9-C3' bond. The short-chain dehydrogenase/reductase FrzI then produces dephospho-(-)-FR901483 that is phosphorylated at C4'-OH into (-)-FR901483 by the phosphotransferase FrzJ. The polypeptide is Phosphotransferase FrzJ (Cladobotryum sp).